Consider the following 581-residue polypeptide: Multidrug resistance-like ATP-binding protein MdlA (581 aa).

An ABC transmembrane type-1 domain is found at 18 to 303 (YLGSIILLII…LAWMFNIVER (286 aa)). A run of 6 helical transmembrane segments spans residues 23–43 (ILLI…GILI), 53–73 (GFEI…VYIL), 127–149 (VVFA…ISVL), 153–175 (ITQI…AILI), 247–267 (VIYL…GWLV), and 280–300 (FIMY…MFNI). The region spanning 337 to 571 (INIDMFFYPK…KNWYKSMYDH (235 aa)) is the ABC transporter domain. Residue 369-376 (GPTGAGKS) coordinates ATP.

This sequence belongs to the ABC transporter superfamily. Drug exporter-2 (TC 3.A.1.117) family.

The protein resides in the cell membrane. It catalyses the reaction ATP + H2O + xenobioticSide 1 = ADP + phosphate + xenobioticSide 2.. This is Multidrug resistance-like ATP-binding protein MdlA (mdlA) from Buchnera aphidicola subsp. Schizaphis graminum (strain Sg).